The following is a 25-amino-acid chain: Grammistin Pp 3 (25 aa).

The protein belongs to the grammistin family. Group 3 subfamily. As to quaternary structure, exists as aggregates of 3-4 molecules. In terms of tissue distribution, expressed by the skin glands.

Its subcellular location is the secreted. In terms of biological role, thanks to its abundant amphiphilic alpha-helices, it may integrate into membrane phospholipids, leading to lysis of the membrane. Has hemolytic activity. Has antibacterial activity with a broad spectrum against various species of bacteria including both Gram-positive and Gram-negative groups. Also has ichthyotoxic activity. This is Grammistin Pp 3 from Pogonoperca punctata (Clown grouper).